A 394-amino-acid chain; its full sequence is Flap endonuclease 1-A (394 aa).

The segment at 1–105 (MGIKGLTGLL…GVLSKRLERR (105 aa)) is N-domain. Asp-34 is a binding site for Mg(2+). 2 residues coordinate DNA: Arg-47 and Arg-71. 5 residues coordinate Mg(2+): Asp-87, Glu-159, Glu-161, Asp-180, and Asp-182. Residues 123-254 (DVDRFSRRTV…KSALKLIREY (132 aa)) form an I-domain region. Glu-159 contributes to the DNA binding site. Residues Gly-232 and Asp-234 each coordinate DNA. Asp-234 provides a ligand contact to Mg(2+). An interaction with PCNA region spans residues 341 to 349 (QQGRLDGFF). A disordered region spans residues 356 to 375 (KAAAPAPVGKAKGKGKVDAK).

Belongs to the XPG/RAD2 endonuclease family. FEN1 subfamily. In terms of assembly, interacts with PCNA. Three molecules of FEN1 bind to one PCNA trimer with each molecule binding to one PCNA monomer. PCNA stimulates the nuclease activity without altering cleavage specificity. The cofactor is Mg(2+). Phosphorylated. Phosphorylation upon DNA damage induces relocalization to the nuclear plasma.

It localises to the nucleus. It is found in the nucleolus. The protein resides in the nucleoplasm. The protein localises to the mitochondrion. Its function is as follows. Structure-specific nuclease with 5'-flap endonuclease and 5'-3' exonuclease activities involved in DNA replication and repair. During DNA replication, cleaves the 5'-overhanging flap structure that is generated by displacement synthesis when DNA polymerase encounters the 5'-end of a downstream Okazaki fragment. It enters the flap from the 5'-end and then tracks to cleave the flap base, leaving a nick for ligation. Also involved in the long patch base excision repair (LP-BER) pathway, by cleaving within the apurinic/apyrimidinic (AP) site-terminated flap. Acts as a genome stabilization factor that prevents flaps from equilibrating into structures that lead to duplications and deletions. Also possesses 5'-3' exonuclease activity on nicked or gapped double-stranded DNA, and exhibits RNase H activity. Also involved in replication and repair of rDNA and in repairing mitochondrial DNA. This chain is Flap endonuclease 1-A, found in Laccaria bicolor (strain S238N-H82 / ATCC MYA-4686) (Bicoloured deceiver).